Consider the following 100-residue polypeptide: Large ribosomal subunit protein uL23 (100 aa).

The protein belongs to the universal ribosomal protein uL23 family. In terms of assembly, part of the 50S ribosomal subunit. Contacts protein L29, and trigger factor when it is bound to the ribosome.

Its function is as follows. One of the early assembly proteins it binds 23S rRNA. One of the proteins that surrounds the polypeptide exit tunnel on the outside of the ribosome. Forms the main docking site for trigger factor binding to the ribosome. The chain is Large ribosomal subunit protein uL23 from Shewanella sp. (strain MR-4).